A 179-amino-acid polypeptide reads, in one-letter code: ATP-dependent protease subunit HslV (179 aa).

Residue threonine 7 is part of the active site. The Na(+) site is built by glycine 162, cysteine 165, and threonine 168.

This sequence belongs to the peptidase T1B family. HslV subfamily. A double ring-shaped homohexamer of HslV is capped on each side by a ring-shaped HslU homohexamer. The assembly of the HslU/HslV complex is dependent on binding of ATP.

Its subcellular location is the cytoplasm. It carries out the reaction ATP-dependent cleavage of peptide bonds with broad specificity.. Allosterically activated by HslU binding. Its function is as follows. Protease subunit of a proteasome-like degradation complex believed to be a general protein degrading machinery. The sequence is that of ATP-dependent protease subunit HslV from Bordetella avium (strain 197N).